A 142-amino-acid chain; its full sequence is Hemoglobin subunit alpha-B (142 aa).

Residues 2 to 142 (PFSASDRHDI…VSETLYSKYR (141 aa)) enclose the Globin domain. O2 is bound at residue Q59. H88 contributes to the heme b binding site.

It belongs to the globin family. As to quaternary structure, heterotetramer of either two alpha-B chains or two alpha-C chains and two beta chains. The two major hemoglobins, B and C, associate upon deoxygenation to form a trimer of tetramers, BC2, that has a much lower affinity for oxygen than either component alone. In terms of tissue distribution, red blood cells.

Its function is as follows. The alpha-B chain is a component of adult hemoglobin B. This chain is Hemoglobin subunit alpha-B, found in Aquarana catesbeiana (American bullfrog).